A 446-amino-acid polypeptide reads, in one-letter code: UDP-N-acetylmuramoylalanine--D-glutamate ligase (446 aa).

An ATP-binding site is contributed by 112–118 (GTNGKST).

The protein belongs to the MurCDEF family.

The protein resides in the cytoplasm. It carries out the reaction UDP-N-acetyl-alpha-D-muramoyl-L-alanine + D-glutamate + ATP = UDP-N-acetyl-alpha-D-muramoyl-L-alanyl-D-glutamate + ADP + phosphate + H(+). It participates in cell wall biogenesis; peptidoglycan biosynthesis. Its function is as follows. Cell wall formation. Catalyzes the addition of glutamate to the nucleotide precursor UDP-N-acetylmuramoyl-L-alanine (UMA). This is UDP-N-acetylmuramoylalanine--D-glutamate ligase from Baumannia cicadellinicola subsp. Homalodisca coagulata.